A 298-amino-acid chain; its full sequence is Protoheme IX farnesyltransferase (298 aa).

The next 8 helical transmembrane spans lie at isoleucine 26–proline 46, leucine 48–isoleucine 68, phenylalanine 110–phenylalanine 130, isoleucine 147–glycine 167, valine 174–phenylalanine 194, isoleucine 220–valine 240, leucine 243–leucine 263, and threonine 276–threonine 296.

This sequence belongs to the UbiA prenyltransferase family. Protoheme IX farnesyltransferase subfamily. As to quaternary structure, interacts with CtaA.

The protein localises to the cell membrane. The catalysed reaction is heme b + (2E,6E)-farnesyl diphosphate + H2O = Fe(II)-heme o + diphosphate. It participates in porphyrin-containing compound metabolism; heme O biosynthesis; heme O from protoheme: step 1/1. Functionally, converts heme B (protoheme IX) to heme O by substitution of the vinyl group on carbon 2 of heme B porphyrin ring with a hydroxyethyl farnesyl side group. This is Protoheme IX farnesyltransferase from Symbiobacterium thermophilum (strain DSM 24528 / JCM 14929 / IAM 14863 / T).